A 166-amino-acid polypeptide reads, in one-letter code: SUMO-conjugating enzyme UBC9 (166 aa).

The region spanning isoleucine 4–alanine 157 is the UBC core domain. The active-site Glycyl thioester intermediate is cysteine 93.

It belongs to the ubiquitin-conjugating enzyme family. In terms of assembly, interacts with brd-1 and rad-51. Interacts with smo-1 and sop-2. Interacts with bet-1 (via BROMO domain 2). Interacts with isoforms 1 and 2 of X-box-binding protein xbp-1.

The protein resides in the nucleus envelope. It participates in protein modification; protein sumoylation. In terms of biological role, accepts the ubiquitin-like protein smo-1 from the aos-1-uba-2 E1 complex and catalyzes its covalent attachment to other proteins with the help of an E3 ligase such as gei-17. Required to sumoylate the ETS transcription factor lin-1, Polycomb protein sop-2, and intermediate filament proteins, such as ifb-1. Required for embryonic development, fertility, vulval morphogenesis, inhibition of vulval cell fates, lifespan, and neuromuscular activity. The polypeptide is SUMO-conjugating enzyme UBC9 (Caenorhabditis elegans).